A 425-amino-acid polypeptide reads, in one-letter code: Serine--tRNA ligase (425 aa).

Position 228–230 (228–230 (TSE)) interacts with L-serine. 259–261 (RSE) contacts ATP. E282 contributes to the L-serine binding site. 346–349 (EISS) contacts ATP. An L-serine-binding site is contributed by S384.

It belongs to the class-II aminoacyl-tRNA synthetase family. Type-1 seryl-tRNA synthetase subfamily. In terms of assembly, homodimer. The tRNA molecule binds across the dimer.

It localises to the cytoplasm. It catalyses the reaction tRNA(Ser) + L-serine + ATP = L-seryl-tRNA(Ser) + AMP + diphosphate + H(+). The enzyme catalyses tRNA(Sec) + L-serine + ATP = L-seryl-tRNA(Sec) + AMP + diphosphate + H(+). Its pathway is aminoacyl-tRNA biosynthesis; selenocysteinyl-tRNA(Sec) biosynthesis; L-seryl-tRNA(Sec) from L-serine and tRNA(Sec): step 1/1. In terms of biological role, catalyzes the attachment of serine to tRNA(Ser). Is also able to aminoacylate tRNA(Sec) with serine, to form the misacylated tRNA L-seryl-tRNA(Sec), which will be further converted into selenocysteinyl-tRNA(Sec). The sequence is that of Serine--tRNA ligase from Ehrlichia ruminantium (strain Gardel).